The primary structure comprises 442 residues: tRNA modification GTPase MnmE (442 aa).

Residues R21, E79, and K118 each contribute to the (6S)-5-formyl-5,6,7,8-tetrahydrofolate site. The region spanning 215 to 365 (GLKIAIVGKP…LENKLSSYCN (151 aa)) is the TrmE-type G domain. Residues 225 to 230 (NVGKSS), 244 to 250 (TNEAGTT), and 269 to 272 (DTAG) contribute to the GTP site. Residues S229 and T250 each coordinate Mg(2+). Position 442 (K442) interacts with (6S)-5-formyl-5,6,7,8-tetrahydrofolate.

This sequence belongs to the TRAFAC class TrmE-Era-EngA-EngB-Septin-like GTPase superfamily. TrmE GTPase family. As to quaternary structure, homodimer. Heterotetramer of two MnmE and two MnmG subunits. Requires K(+) as cofactor.

The protein resides in the cytoplasm. Its function is as follows. Exhibits a very high intrinsic GTPase hydrolysis rate. Involved in the addition of a carboxymethylaminomethyl (cmnm) group at the wobble position (U34) of certain tRNAs, forming tRNA-cmnm(5)s(2)U34. The polypeptide is tRNA modification GTPase MnmE (Mycoplasma mobile (strain ATCC 43663 / 163K / NCTC 11711) (Mesomycoplasma mobile)).